A 150-amino-acid polypeptide reads, in one-letter code: Large ribosomal subunit protein bL9 (150 aa).

It belongs to the bacterial ribosomal protein bL9 family.

Its function is as follows. Binds to the 23S rRNA. The chain is Large ribosomal subunit protein bL9 from Acidovorax ebreus (strain TPSY) (Diaphorobacter sp. (strain TPSY)).